Consider the following 221-residue polypeptide: Urease accessory protein UreE (221 aa).

The segment covering 171 to 180 (HHGHDHDHGH) has biased composition (basic and acidic residues). The disordered stretch occupies residues 171 to 221 (HHGHDHDHGHSHSHSHSHSHSHSHSHDHDHDHDHEHDVKGHVHGPGCGHKH). The span at 181–193 (SHSHSHSHSHSHS) shows a compositional bias: basic residues. The segment covering 194-210 (HSHDHDHDHDHEHDVKG) has biased composition (basic and acidic residues).

It belongs to the UreE family.

Its subcellular location is the cytoplasm. Functionally, involved in urease metallocenter assembly. Binds nickel. Probably functions as a nickel donor during metallocenter assembly. In Cupriavidus pinatubonensis (strain JMP 134 / LMG 1197) (Cupriavidus necator (strain JMP 134)), this protein is Urease accessory protein UreE.